We begin with the raw amino-acid sequence, 579 residues long: GPI alpha-1,2-mannosyltransferase 4 (579 aa).

A run of 8 helical transmembrane segments spans residues 131–151 (LLLT…APPM), 156–173 (WNAL…VFYT), 180–200 (IEGL…TWGP), 216–236 (LGGI…FAVV), 258–278 (ALVL…TDSW), 369–389 (YLLL…HQEA), 391–411 (FLIP…QPVP), and 416–436 (VVLF…GGLV).

This sequence belongs to the glycosyltransferase 22 family. PIGZ subfamily. As to expression, widely expressed at low level, with highest level in brain and colon.

It is found in the endoplasmic reticulum membrane. Its pathway is glycolipid biosynthesis; glycosylphosphatidylinositol-anchor biosynthesis. Its function is as follows. Alpha-1,2-mannosyltransferase that catalyzes the transfer of the fourth mannose, via an alpha-1,2 bond, from a dolichol-phosphate-mannose (Dol-P-Man) to an alpha-D-Man-(1-&gt;2)-alpha-D-Man-(1-&gt;6)-2-PEtn-alpha-D-Man-(1-&gt;4)-alpha-D-GlcN-(1-&gt;6)-(1-radyl,2-acyl-sn-glycero-3-phospho)-2-acyl-inositol (also termed H6) intermediate and participates in the twelfth step of the glycosylphosphatidylinositol-anchor biosynthesis. The presence of a fourth mannose in GPI is facultative, suggesting that it only exists in some tissues. The chain is GPI alpha-1,2-mannosyltransferase 4 from Homo sapiens (Human).